A 64-amino-acid polypeptide reads, in one-letter code: MPKIKTHRGAAKRFKKTGTGKIKRSKAYASHLLGGKSPKRKRNLRKAGLVSEAETRGISRLIPY.

Positions 1–26 (MPKIKTHRGAAKRFKKTGTGKIKRSK) are enriched in basic residues. The interval 1–48 (MPKIKTHRGAAKRFKKTGTGKIKRSKAYASHLLGGKSPKRKRNLRKAG) is disordered.

The protein belongs to the bacterial ribosomal protein bL35 family.

The polypeptide is Large ribosomal subunit protein bL35 (Syntrophomonas wolfei subsp. wolfei (strain DSM 2245B / Goettingen)).